Consider the following 305-residue polypeptide: UDP-3-O-acyl-N-acetylglucosamine deacetylase (305 aa).

The Zn(2+) site is built by His-79, His-238, and Asp-242. Catalysis depends on His-265, which acts as the Proton donor.

This sequence belongs to the LpxC family. It depends on Zn(2+) as a cofactor.

The catalysed reaction is a UDP-3-O-[(3R)-3-hydroxyacyl]-N-acetyl-alpha-D-glucosamine + H2O = a UDP-3-O-[(3R)-3-hydroxyacyl]-alpha-D-glucosamine + acetate. It participates in glycolipid biosynthesis; lipid IV(A) biosynthesis; lipid IV(A) from (3R)-3-hydroxytetradecanoyl-[acyl-carrier-protein] and UDP-N-acetyl-alpha-D-glucosamine: step 2/6. Catalyzes the hydrolysis of UDP-3-O-myristoyl-N-acetylglucosamine to form UDP-3-O-myristoylglucosamine and acetate, the committed step in lipid A biosynthesis. The polypeptide is UDP-3-O-acyl-N-acetylglucosamine deacetylase (Histophilus somni (strain 129Pt) (Haemophilus somnus)).